The sequence spans 334 residues: Holliday junction branch migration complex subunit RuvB (334 aa).

Positions 1–180 (MSEFLTPERT…FGIILELDFY (180 aa)) are large ATPase domain (RuvB-L). Residues Leu19, Arg20, Gly61, Lys64, Thr65, Thr66, 127-129 (EDF), Arg170, Tyr180, and Arg217 each bind ATP. Mg(2+) is bound at residue Thr65. The segment at 181–251 (TVKELKEIIK…IVLKTMEVLN (71 aa)) is small ATPAse domain (RuvB-S). The segment at 254-334 (AEGLDEFDRK…KYEVPENRLF (81 aa)) is head domain (RuvB-H). The DNA site is built by Arg309 and Arg314.

Belongs to the RuvB family. Homohexamer. Forms an RuvA(8)-RuvB(12)-Holliday junction (HJ) complex. HJ DNA is sandwiched between 2 RuvA tetramers; dsDNA enters through RuvA and exits via RuvB. An RuvB hexamer assembles on each DNA strand where it exits the tetramer. Each RuvB hexamer is contacted by two RuvA subunits (via domain III) on 2 adjacent RuvB subunits; this complex drives branch migration. In the full resolvosome a probable DNA-RuvA(4)-RuvB(12)-RuvC(2) complex forms which resolves the HJ.

The protein localises to the cytoplasm. It catalyses the reaction ATP + H2O = ADP + phosphate + H(+). The RuvA-RuvB-RuvC complex processes Holliday junction (HJ) DNA during genetic recombination and DNA repair, while the RuvA-RuvB complex plays an important role in the rescue of blocked DNA replication forks via replication fork reversal (RFR). RuvA specifically binds to HJ cruciform DNA, conferring on it an open structure. The RuvB hexamer acts as an ATP-dependent pump, pulling dsDNA into and through the RuvAB complex. RuvB forms 2 homohexamers on either side of HJ DNA bound by 1 or 2 RuvA tetramers; 4 subunits per hexamer contact DNA at a time. Coordinated motions by a converter formed by DNA-disengaged RuvB subunits stimulates ATP hydrolysis and nucleotide exchange. Immobilization of the converter enables RuvB to convert the ATP-contained energy into a lever motion, pulling 2 nucleotides of DNA out of the RuvA tetramer per ATP hydrolyzed, thus driving DNA branch migration. The RuvB motors rotate together with the DNA substrate, which together with the progressing nucleotide cycle form the mechanistic basis for DNA recombination by continuous HJ branch migration. Branch migration allows RuvC to scan DNA until it finds its consensus sequence, where it cleaves and resolves cruciform DNA. This Thermotoga petrophila (strain ATCC BAA-488 / DSM 13995 / JCM 10881 / RKU-1) protein is Holliday junction branch migration complex subunit RuvB.